A 273-amino-acid polypeptide reads, in one-letter code: Peptide deformylase 1B, chloroplastic/mitochondrial (273 aa).

The N-terminal 56 residues, 1 to 56 (MAVCNCFLQAPPLSRILLPVLSRRATTLSAGYGRLKSTVTFCSTVNRTSPLTSSVR), are a transit peptide targeting the chloroplast and mitochondrion. Fe cation-binding residues include C171 and H213. Residue E214 is part of the active site. H217 lines the Fe cation pocket. A compositionally biased stretch (basic and acidic residues) spans 246-261 (YEEKTGLPSPERVEAR). Positions 246–273 (YEEKTGLPSPERVEARQKRKAGVGFGKR) are disordered. The span at 262 to 273 (QKRKAGVGFGKR) shows a compositional bias: basic residues.

This sequence belongs to the polypeptide deformylase family. As to quaternary structure, homodimer. Requires Fe(2+) as cofactor. Expressed in leaves and flowers.

It is found in the plastid. Its subcellular location is the chloroplast stroma. It localises to the mitochondrion. It carries out the reaction N-terminal N-formyl-L-methionyl-[peptide] + H2O = N-terminal L-methionyl-[peptide] + formate. Inhibited by actinonin. Its function is as follows. Removes the formyl group from the N-terminal Met of newly synthesized proteins. Has a preferred substrate specificity towards the photosystem II (PS II) D1 polypeptide. In Arabidopsis thaliana (Mouse-ear cress), this protein is Peptide deformylase 1B, chloroplastic/mitochondrial (PDF1B).